Here is a 295-residue protein sequence, read N- to C-terminus: Ribosomal protein L11 methyltransferase (295 aa).

S-adenosyl-L-methionine is bound by residues threonine 146, glycine 167, aspartate 189, and asparagine 231.

It belongs to the methyltransferase superfamily. PrmA family.

Its subcellular location is the cytoplasm. The catalysed reaction is L-lysyl-[protein] + 3 S-adenosyl-L-methionine = N(6),N(6),N(6)-trimethyl-L-lysyl-[protein] + 3 S-adenosyl-L-homocysteine + 3 H(+). Methylates ribosomal protein L11. The polypeptide is Ribosomal protein L11 methyltransferase (Vibrio cholerae serotype O1 (strain M66-2)).